Here is a 129-residue protein sequence, read N- to C-terminus: MKYFVVALALVAAFACIAESKPAESEHELAEVEEENELADLEDAVWLEHLADLSDLEEARGFFGNTWKKIKGKADKIMLKKAVKIMVKKEGISKEEAQAKVDAMSKKQIRLYVLKHYGKKALQKASEKL.

The signal sequence occupies residues 1–20; sequence MKYFVVALALVAAFACIAES. A propeptide spanning residues 21–60 is cleaved from the precursor; it reads KPAESEHELAEVEEENELADLEDAVWLEHLADLSDLEEAR. The short motif at 57–60 is the Processing quadruplet motif element; sequence EEAR.

Post-translationally, cleavage of the propeptide depends on the processing quadruplet motif (XXXR, with at least one of X being E). Expressed by the venom gland.

It localises to the secreted. Functionally, insecticidal, cytolytic and antimicrobial peptide. Has insecticidal activity against the flesh fly S.carnaria. Has antibacterial activity against the Gram-negative bacteria E.coli. Forms voltage-dependent, ion-permeable channels in membranes. At high concentration causes cell membrane lysis. The protein is M-zodatoxin-Lt8g (cit 1-8) of Lachesana tarabaevi (Spider).